Reading from the N-terminus, the 184-residue chain is MSTSSSPYAAFAALLSSAGHSVSPAELHGLLLGRSCAGAGFDADAWLLDAADLLGGEPQDSVRQALIGLQEMVKGELCSEDMAVVLLLPDDETPLAQRAVALGQWCQGFLGGFGLTARDGALSAEAMEVLQDLSAIAQVQSALEESEDGENDYMEVMEYLRVAPLLLFTECAKPAAPAAKPSLH.

Belongs to the UPF0149 family.

The sequence is that of UPF0149 protein Pmen_0324 from Ectopseudomonas mendocina (strain ymp) (Pseudomonas mendocina).